The following is a 426-amino-acid chain: 3-phosphoshikimate 1-carboxyvinyltransferase (426 aa).

Positions 20, 21, and 25 each coordinate 3-phosphoshikimate. Lys20 serves as a coordination point for phosphoenolpyruvate. Phosphoenolpyruvate-binding residues include Gly92 and Arg120. Residues Ser166, Gln168, Asp312, and Lys339 each contribute to the 3-phosphoshikimate site. Gln168 contributes to the phosphoenolpyruvate binding site. Asp312 (proton acceptor) is an active-site residue. The phosphoenolpyruvate site is built by Arg343 and Arg385.

It belongs to the EPSP synthase family. As to quaternary structure, monomer.

Its subcellular location is the cytoplasm. The enzyme catalyses 3-phosphoshikimate + phosphoenolpyruvate = 5-O-(1-carboxyvinyl)-3-phosphoshikimate + phosphate. It functions in the pathway metabolic intermediate biosynthesis; chorismate biosynthesis; chorismate from D-erythrose 4-phosphate and phosphoenolpyruvate: step 6/7. Its function is as follows. Catalyzes the transfer of the enolpyruvyl moiety of phosphoenolpyruvate (PEP) to the 5-hydroxyl of shikimate-3-phosphate (S3P) to produce enolpyruvyl shikimate-3-phosphate and inorganic phosphate. The chain is 3-phosphoshikimate 1-carboxyvinyltransferase from Enterococcus faecalis (strain ATCC 700802 / V583).